A 362-amino-acid polypeptide reads, in one-letter code: Biotin synthase (362 aa).

One can recognise a Radical SAM core domain in the interval 39–267; sequence NVVQVSTLLS…ETQVRLSAGR (229 aa). [4Fe-4S] cluster is bound by residues Cys-54, Cys-58, and Cys-61. Cys-98, Cys-130, Cys-190, and Arg-262 together coordinate [2Fe-2S] cluster. The tract at residues 317 to 362 is disordered; the sequence is PFTKVSQPTTVEAKDSRYESLGEKPKWSRPSHTIEKNLELSGKGKN. A compositionally biased stretch (basic and acidic residues) spans 328–354; sequence EAKDSRYESLGEKPKWSRPSHTIEKNL.

It belongs to the radical SAM superfamily. Biotin synthase family. Homodimer. [4Fe-4S] cluster serves as cofactor. It depends on [2Fe-2S] cluster as a cofactor.

The enzyme catalyses (4R,5S)-dethiobiotin + (sulfur carrier)-SH + 2 reduced [2Fe-2S]-[ferredoxin] + 2 S-adenosyl-L-methionine = (sulfur carrier)-H + biotin + 2 5'-deoxyadenosine + 2 L-methionine + 2 oxidized [2Fe-2S]-[ferredoxin]. It functions in the pathway cofactor biosynthesis; biotin biosynthesis; biotin from 7,8-diaminononanoate: step 2/2. Catalyzes the conversion of dethiobiotin (DTB) to biotin by the insertion of a sulfur atom into dethiobiotin via a radical-based mechanism. The sequence is that of Biotin synthase from Flavobacterium psychrophilum (strain ATCC 49511 / DSM 21280 / CIP 103535 / JIP02/86).